The following is a 214-amino-acid chain: Phosphatidylserine decarboxylase proenzyme (214 aa).

The active-site Schiff-base intermediate with substrate; via pyruvic acid is the S182. S182 is subject to Pyruvic acid (Ser); by autocatalysis.

This sequence belongs to the phosphatidylserine decarboxylase family. PSD-A subfamily. As to quaternary structure, heterodimer of a large membrane-associated beta subunit and a small pyruvoyl-containing alpha subunit. The cofactor is pyruvate. Post-translationally, is synthesized initially as an inactive proenzyme. Formation of the active enzyme involves a self-maturation process in which the active site pyruvoyl group is generated from an internal serine residue via an autocatalytic post-translational modification. Two non-identical subunits are generated from the proenzyme in this reaction, and the pyruvate is formed at the N-terminus of the alpha chain, which is derived from the carboxyl end of the proenzyme. The post-translation cleavage follows an unusual pathway, termed non-hydrolytic serinolysis, in which the side chain hydroxyl group of the serine supplies its oxygen atom to form the C-terminus of the beta chain, while the remainder of the serine residue undergoes an oxidative deamination to produce ammonia and the pyruvoyl prosthetic group on the alpha chain.

Its subcellular location is the cell membrane. It catalyses the reaction a 1,2-diacyl-sn-glycero-3-phospho-L-serine + H(+) = a 1,2-diacyl-sn-glycero-3-phosphoethanolamine + CO2. It functions in the pathway phospholipid metabolism; phosphatidylethanolamine biosynthesis; phosphatidylethanolamine from CDP-diacylglycerol: step 2/2. Its function is as follows. Catalyzes the formation of phosphatidylethanolamine (PtdEtn) from phosphatidylserine (PtdSer). In Solidesulfovibrio magneticus (strain ATCC 700980 / DSM 13731 / RS-1) (Desulfovibrio magneticus), this protein is Phosphatidylserine decarboxylase proenzyme.